The primary structure comprises 654 residues: Probable Xaa-Pro aminopeptidase P (654 aa).

Residues D449, D460, E558, and E572 each coordinate Mn(2+).

It belongs to the peptidase M24B family. It depends on Mn(2+) as a cofactor.

It catalyses the reaction Release of any N-terminal amino acid, including proline, that is linked to proline, even from a dipeptide or tripeptide.. In terms of biological role, catalyzes the removal of a penultimate prolyl residue from the N-termini of peptides. This Aspergillus fumigatus (strain CBS 144.89 / FGSC A1163 / CEA10) (Neosartorya fumigata) protein is Probable Xaa-Pro aminopeptidase P (ampp).